We begin with the raw amino-acid sequence, 451 residues long: tRNA-2-methylthio-N(6)-dimethylallyladenosine synthase (451 aa).

The MTTase N-terminal domain maps to Arg-11 to Asp-127. Residues Cys-20, Cys-56, Cys-90, Cys-162, Cys-166, and Cys-169 each contribute to the [4Fe-4S] cluster site. The Radical SAM core domain maps to Arg-148 to Glu-385. Residues Gln-388–Val-451 form the TRAM domain.

The protein belongs to the methylthiotransferase family. MiaB subfamily. Monomer. [4Fe-4S] cluster serves as cofactor.

The protein resides in the cytoplasm. The enzyme catalyses N(6)-dimethylallyladenosine(37) in tRNA + (sulfur carrier)-SH + AH2 + 2 S-adenosyl-L-methionine = 2-methylsulfanyl-N(6)-dimethylallyladenosine(37) in tRNA + (sulfur carrier)-H + 5'-deoxyadenosine + L-methionine + A + S-adenosyl-L-homocysteine + 2 H(+). In terms of biological role, catalyzes the methylthiolation of N6-(dimethylallyl)adenosine (i(6)A), leading to the formation of 2-methylthio-N6-(dimethylallyl)adenosine (ms(2)i(6)A) at position 37 in tRNAs that read codons beginning with uridine. This chain is tRNA-2-methylthio-N(6)-dimethylallyladenosine synthase, found in Rippkaea orientalis (strain PCC 8801 / RF-1) (Cyanothece sp. (strain PCC 8801)).